We begin with the raw amino-acid sequence, 169 residues long: Protein FAM106A (169 aa).

Belongs to the FAM106 family.

The polypeptide is Protein FAM106A (FAM106A) (Homo sapiens (Human)).